The chain runs to 537 residues: O-phosphoserine--tRNA(Cys) ligase (537 aa).

Substrate-binding positions include 186–188 (HMT), 231–233 (SAS), 273–274 (YY), and Asn317.

This sequence belongs to the class-II aminoacyl-tRNA synthetase family. O-phosphoseryl-tRNA(Cys) synthetase subfamily. Homotetramer. Interacts with SepCysS.

The catalysed reaction is tRNA(Cys) + O-phospho-L-serine + ATP = O-phospho-L-seryl-tRNA(Cys) + AMP + diphosphate. Its function is as follows. Catalyzes the attachment of O-phosphoserine (Sep) to tRNA(Cys). This is O-phosphoserine--tRNA(Cys) ligase from Methanococcus maripaludis (strain C5 / ATCC BAA-1333).